A 930-amino-acid polypeptide reads, in one-letter code: Isoleucine--tRNA ligase (930 aa).

A 'HIGH' region motif is present at residues 57–67; that stretch reads PYANGNIHVGH. Glu-554 contacts L-isoleucyl-5'-AMP. The 'KMSKS' region motif lies at 595 to 599; it reads KMSKS. Lys-598 contacts ATP. 4 residues coordinate Zn(2+): Cys-888, Cys-891, Cys-908, and Cys-911.

This sequence belongs to the class-I aminoacyl-tRNA synthetase family. IleS type 1 subfamily. Monomer. It depends on Zn(2+) as a cofactor.

The protein localises to the cytoplasm. The enzyme catalyses tRNA(Ile) + L-isoleucine + ATP = L-isoleucyl-tRNA(Ile) + AMP + diphosphate. Catalyzes the attachment of isoleucine to tRNA(Ile). As IleRS can inadvertently accommodate and process structurally similar amino acids such as valine, to avoid such errors it has two additional distinct tRNA(Ile)-dependent editing activities. One activity is designated as 'pretransfer' editing and involves the hydrolysis of activated Val-AMP. The other activity is designated 'posttransfer' editing and involves deacylation of mischarged Val-tRNA(Ile). The chain is Isoleucine--tRNA ligase from Streptococcus pneumoniae (strain ATCC 700669 / Spain 23F-1).